The following is a 272-amino-acid chain: Low-density lipoprotein receptor class A domain-containing protein 2 (272 aa).

Residues 1-25 (MEACCLLQLPQRLLLLGAAALTATA) form the signal peptide. Over 26-233 (LETADLAELC…GSTDAHTSRS (208 aa)) the chain is Extracellular. A glycan (N-linked (GlcNAc...) asparagine) is linked at asparagine 97. Residues 172–214 (PCGAYFRCQNGRCIPSSLVCDPWGMDNCGDGSDQGSWSPADCR) enclose the LDL-receptor class A domain. 3 disulfide bridges follow: cysteine 173-cysteine 184, cysteine 179-cysteine 199, and cysteine 191-cysteine 213. The tract at residues 202–272 (GSDQGSWSPA…QDAALEGSTE (71 aa)) is disordered. Residues 220-236 (PSQTGSTDAHTSRSLTP) are compositionally biased toward polar residues. A helical transmembrane segment spans residues 234–250 (LTPSPALGSAGSLWIAA). The Cytoplasmic segment spans residues 251 to 272 (ERSSPAGRDPTRQDAALEGSTE).

The protein belongs to the LDLR family.

Its subcellular location is the membrane. The polypeptide is Low-density lipoprotein receptor class A domain-containing protein 2 (LDLRAD2) (Homo sapiens (Human)).